The chain runs to 255 residues: MNTKVPIYSINGEKRGEIDLPEIFNYSVREDLIRKAFRAISLSLRQPYGSSPLAGLRRVGHTTKPGLGISRMPRIAGGSRVVGIASAVGGKSAHSPRSTKKLYVGINEKERKMAKFSAIAMTASADAVRKRGHRFSESLPLPVVVEDAVSGIKKTKDAVNLLKSIGLYEDILRSKEGKHIRAGRGKMRNRRYKVPKSLLIVGTDSVSLKVFKSLPGVDVASMDSLSIRKLAPGGVGGRLTVYTESAIEKLREANA.

It belongs to the universal ribosomal protein uL4 family. In terms of assembly, part of the 50S ribosomal subunit.

One of the primary rRNA binding proteins, this protein initially binds near the 5'-end of the 23S rRNA. It is important during the early stages of 50S assembly. It makes multiple contacts with different domains of the 23S rRNA in the assembled 50S subunit and ribosome. Its function is as follows. Forms part of the polypeptide exit tunnel. The chain is Large ribosomal subunit protein uL4 from Thermoplasma volcanium (strain ATCC 51530 / DSM 4299 / JCM 9571 / NBRC 15438 / GSS1).